A 49-amino-acid chain; its full sequence is L-amino-acid oxidase (49 aa).

Position 43 to 44 (43 to 44 (MS)) interacts with FAD.

Belongs to the flavin monoamine oxidase family. FIG1 subfamily. As to quaternary structure, homodimer; non-covalently linked. FAD is required as a cofactor. N-glycosylated. As to expression, expressed by the venom gland.

The protein localises to the secreted. It catalyses the reaction an L-alpha-amino acid + O2 + H2O = a 2-oxocarboxylate + H2O2 + NH4(+). It carries out the reaction L-leucine + O2 + H2O = 4-methyl-2-oxopentanoate + H2O2 + NH4(+). Catalyzes an oxidative deamination of predominantly hydrophobic and aromatic L-amino acids, thus producing hydrogen peroxide that may contribute to the diverse toxic effects of this enzyme. Shows activity on L-Leu. Exhibits diverse biological activities, such as hemorrhage, hemolysis, edema, antibacterial and antiparasitic activities, as well as regulation of platelet aggregation. Its effect on platelets is controversial, since it either induces aggregation or inhibits agonist-induced aggregation. These different effects are probably due to different experimental conditions. In addition, this protein induces apoptosis and necrosis and has inhibitory effects on rat kidney function (decrease of blood flow and glomerular filtration). In Bothrops insularis (Golden lancehead), this protein is L-amino-acid oxidase.